The sequence spans 118 residues: Protein TusC (118 aa).

This sequence belongs to the DsrF/TusC family. In terms of assembly, heterohexamer, formed by a dimer of trimers. The hexameric TusBCD complex contains 2 copies each of TusB, TusC and TusD. The TusBCD complex interacts with TusE.

It is found in the cytoplasm. Its function is as follows. Part of a sulfur-relay system required for 2-thiolation of 5-methylaminomethyl-2-thiouridine (mnm(5)s(2)U) at tRNA wobble positions. This chain is Protein TusC, found in Salmonella gallinarum (strain 287/91 / NCTC 13346).